The primary structure comprises 267 residues: Ribosomal RNA small subunit methyltransferase A (267 aa).

N12, I14, G39, E60, D84, and N110 together coordinate S-adenosyl-L-methionine.

This sequence belongs to the class I-like SAM-binding methyltransferase superfamily. rRNA adenine N(6)-methyltransferase family. RsmA subfamily.

It localises to the cytoplasm. The catalysed reaction is adenosine(1518)/adenosine(1519) in 16S rRNA + 4 S-adenosyl-L-methionine = N(6)-dimethyladenosine(1518)/N(6)-dimethyladenosine(1519) in 16S rRNA + 4 S-adenosyl-L-homocysteine + 4 H(+). Specifically dimethylates two adjacent adenosines (A1518 and A1519) in the loop of a conserved hairpin near the 3'-end of 16S rRNA in the 30S particle. May play a critical role in biogenesis of 30S subunits. The chain is Ribosomal RNA small subunit methyltransferase A from Mesoplasma florum (strain ATCC 33453 / NBRC 100688 / NCTC 11704 / L1) (Acholeplasma florum).